Reading from the N-terminus, the 226-residue chain is Pathogenesis-related protein R minor form (226 aa).

An N-terminal signal peptide occupies residues 1 to 25 (MNFLKSFPFYAFLCFGQYFVAVTHA). 8 disulfide bridges follow: Cys-34–Cys-225, Cys-75–Cys-85, Cys-90–Cys-96, Cys-140–Cys-214, Cys-145–Cys-197, Cys-153–Cys-163, Cys-167–Cys-176, and Cys-177–Cys-184.

It belongs to the thaumatin family.

It is found in the vacuole. The chain is Pathogenesis-related protein R minor form from Nicotiana tabacum (Common tobacco).